The chain runs to 282 residues: Formate channel FocB (282 aa).

The Cytoplasmic portion of the chain corresponds to 1–35 (MRNKLSFDLQLSARKAAIAERIAAHKIARSKVSVF). The helical transmembrane segment at 36-56 (LMAMSAGVFMAIGFTFYLSVI) threads the bilayer. The Periplasmic segment spans residues 57 to 68 (ADAPSSQALTHL). A helical membrane pass occupies residues 69 to 89 (VGGLCFTLGFILLAVCGTSLF). The Cytoplasmic segment spans residues 90 to 112 (TSSVMTVMAKSRGVISWRTWLIN). A helical membrane pass occupies residues 113–133 (ALLVACGNLAGIACFSLLIWF). Residues 134–163 (SGLVMSENAMWGVAVLHCAEGKMHHTFTES) are Periplasmic-facing. Residues 164–184 (VSLGIMCNLMVCLALWMSYCG) form a helical membrane-spanning segment. Residues 185–190 (RSLCDK) are Cytoplasmic-facing. Residues 191–211 (IVAMILPITLFVASGFEHCIA) traverse the membrane as a helical segment. Topologically, residues 212-248 (NLFVIPFAIAIRHFAPPPFWQLAHSSADNFPALTVSH) are periplasmic. The chain crosses the membrane as a helical span at residues 249–269 (FITANLLPVMLGNIIGGAVLV). Residues 270–282 (SMCYRAIYLRQEP) lie on the Cytoplasmic side of the membrane.

This sequence belongs to the FNT transporter (TC 1.A.16) family.

Its subcellular location is the cell inner membrane. It carries out the reaction formate(in) = formate(out). With respect to regulation, the direction of formate translocation depends on external pH and electron donor source. Involved in the bidirectional transport of formate during mixed-acid fermentation. The sequence is that of Formate channel FocB from Escherichia coli (strain K12).